A 792-amino-acid polypeptide reads, in one-letter code: Xaa-Pro dipeptidyl-peptidase (792 aa).

Residues Ser363, Asp482, and His513 each act as charge relay system in the active site.

It belongs to the peptidase S15 family. As to quaternary structure, homodimer.

The protein localises to the cytoplasm. It carries out the reaction Hydrolyzes Xaa-Pro-|- bonds to release unblocked, N-terminal dipeptides from substrates including Ala-Pro-|-p-nitroanilide and (sequentially) Tyr-Pro-|-Phe-Pro-|-Gly-Pro-|-Ile.. Removes N-terminal dipeptides sequentially from polypeptides having unsubstituted N-termini provided that the penultimate residue is proline. This chain is Xaa-Pro dipeptidyl-peptidase (pepX), found in Lactobacillus delbrueckii subsp. lactis.